The following is a 225-amino-acid chain: PKHD-type hydroxylase YbiX (225 aa).

Residues 78–177 (TLSTPLFNRY…RVASFMWIQS (100 aa)) form the Fe2OG dioxygenase domain. Fe cation contacts are provided by histidine 96, aspartate 98, and histidine 158. Arginine 168 provides a ligand contact to 2-oxoglutarate.

Fe(2+) is required as a cofactor. The cofactor is L-ascorbate.

This is PKHD-type hydroxylase YbiX from Escherichia coli (strain SMS-3-5 / SECEC).